Here is a 164-residue protein sequence, read N- to C-terminus: UPF0178 protein BRADO3147 (164 aa).

Belongs to the UPF0178 family.

In Bradyrhizobium sp. (strain ORS 278), this protein is UPF0178 protein BRADO3147.